The primary structure comprises 339 residues: 3-isopropylmalate dehydrogenase (339 aa).

Substrate is bound by residues R88, R98, R122, and D212. Residues D212, D236, and D240 each coordinate Mg(2+). Residue 272–284 participates in NAD(+) binding; that stretch reads GSAPDIAGQGIAD.

Belongs to the isocitrate and isopropylmalate dehydrogenases family. LeuB type 2 subfamily. In terms of assembly, homodimer. The cofactor is Mg(2+). Mn(2+) serves as cofactor.

It localises to the cytoplasm. It catalyses the reaction (2R,3S)-3-isopropylmalate + NAD(+) = 4-methyl-2-oxopentanoate + CO2 + NADH. Its pathway is amino-acid biosynthesis; L-leucine biosynthesis; L-leucine from 3-methyl-2-oxobutanoate: step 3/4. Functionally, catalyzes the oxidation of 3-carboxy-2-hydroxy-4-methylpentanoate (3-isopropylmalate) to 3-carboxy-4-methyl-2-oxopentanoate. The product decarboxylates to 4-methyl-2 oxopentanoate. The polypeptide is 3-isopropylmalate dehydrogenase (Corynebacterium urealyticum (strain ATCC 43042 / DSM 7109)).